A 132-amino-acid polypeptide reads, in one-letter code: Large ribosomal subunit protein uL14 (132 aa).

This sequence belongs to the universal ribosomal protein uL14 family. As to quaternary structure, part of the 50S ribosomal subunit. Forms a cluster with proteins L3 and L24e, part of which may contact the 16S rRNA in 2 intersubunit bridges.

Functionally, binds to 23S rRNA. Forms part of two intersubunit bridges in the 70S ribosome. This is Large ribosomal subunit protein uL14 from Thermoplasma acidophilum (strain ATCC 25905 / DSM 1728 / JCM 9062 / NBRC 15155 / AMRC-C165).